Reading from the N-terminus, the 465-residue chain is Argininosuccinate lyase (465 aa).

This sequence belongs to the lyase 1 family. Argininosuccinate lyase subfamily.

It localises to the cytoplasm. It carries out the reaction 2-(N(omega)-L-arginino)succinate = fumarate + L-arginine. The protein operates within amino-acid biosynthesis; L-arginine biosynthesis; L-arginine from L-ornithine and carbamoyl phosphate: step 3/3. In Methylococcus capsulatus (strain ATCC 33009 / NCIMB 11132 / Bath), this protein is Argininosuccinate lyase.